Reading from the N-terminus, the 343-residue chain is Protein RecA (343 aa).

An ATP-binding site is contributed by 66–73 (GPESSGKT).

Belongs to the RecA family.

It is found in the cytoplasm. Functionally, can catalyze the hydrolysis of ATP in the presence of single-stranded DNA, the ATP-dependent uptake of single-stranded DNA by duplex DNA, and the ATP-dependent hybridization of homologous single-stranded DNAs. It interacts with LexA causing its activation and leading to its autocatalytic cleavage. This is Protein RecA from Nitrosomonas eutropha (strain DSM 101675 / C91 / Nm57).